Here is an 898-residue protein sequence, read N- to C-terminus: Zinc finger protein 574 (898 aa).

3 C2H2-type zinc fingers span residues 16-38, 76-98, and 126-148; these read YVCS…QNSH, YQCL…QELH, and YECV…RQTH. Ser-164 carries the phosphoserine modification. A C2H2-type 4 zinc finger spans residues 213-235; the sequence is YKCSECSQLFQMPADFLEHQATH. Positions 243-305 are disordered; sequence AEEPATQQET…PRRSSSGESG (63 aa). Basic and acidic residues predominate over residues 273–290; sequence HSYELRNELRNGEAMGRD. Ser-301 carries the phosphoserine modification. 4 C2H2-type zinc fingers span residues 310–332, 337–359, 365–387, and 393–414; these read LFCS…LRSH, FKCP…LGDH, FLCV…RRAH, and HSCP…RRTH. The tract at residues 417–460 is disordered; the sequence is GGVPLPTTPVPPEEPAISFPEPAPAETGELEAPELPVSEESSAE. C2H2-type zinc fingers lie at residues 467–490, 496–518, 524–546, 552–574, 580–602, and 608–631; these read YRCL…RFVH, HKCS…LRTH, FPCP…RLTH, YRCG…RLVH, YRCQ…RYHH, and YKCR…LVVH. The C2H2-type 15; degenerate zinc-finger motif lies at 637 to 660; sequence HRCPSCGAAFPSSLRLREHRCAAA. A C2H2-type 16 zinc finger spans residues 668–690; that stretch reads FECGTCGKKVGSAARLQAHEAAH. The disordered stretch occupies residues 691-735; sequence AAAGPGEVLAKEPPAPRAARATRTPVAPSPTALGGTTSAAPAAPA. The segment covering 707-734 has biased composition (low complexity); it reads RAARATRTPVAPSPTALGGTTSAAPAAP. A Phosphoserine modification is found at Ser-719. Residue Thr-726 is modified to Phosphothreonine. C2H2-type zinc fingers lie at residues 740-762, 768-790, 796-818, and 824-846; these read LECS…RRIH, YPCP…RRLH, FACE…RRIH, and YSCP…RKTH. Residue Arg-834 is modified to Asymmetric dimethylarginine.

The protein belongs to the krueppel C2H2-type zinc-finger protein family.

The protein resides in the nucleus. In terms of biological role, may be involved in transcriptional regulation. The sequence is that of Zinc finger protein 574 (Znf574) from Rattus norvegicus (Rat).